Consider the following 69-residue polypeptide: DNA-directed RNA polymerase subunit omega (69 aa).

The protein belongs to the RNA polymerase subunit omega family. The RNAP catalytic core consists of 2 alpha, 1 beta, 1 beta' and 1 omega subunit. When a sigma factor is associated with the core the holoenzyme is formed, which can initiate transcription.

The catalysed reaction is RNA(n) + a ribonucleoside 5'-triphosphate = RNA(n+1) + diphosphate. Functionally, promotes RNA polymerase assembly. Latches the N- and C-terminal regions of the beta' subunit thereby facilitating its interaction with the beta and alpha subunits. The sequence is that of DNA-directed RNA polymerase subunit omega from Geotalea uraniireducens (strain Rf4) (Geobacter uraniireducens).